Reading from the N-terminus, the 309-residue chain is Probable ABC transporter permease protein YqgH (309 aa).

6 helical membrane passes run 30–50, 88–108, 133–153, 165–185, 214–234, and 280–300; these read MIVT…TIFL, FIFG…PLGI, LVGI…VPFI, LLAG…SISA, LVPA…ARAF, and NTLW…ILLI. The ABC transmembrane type-1 domain maps to 89-300; that stretch reads IFGSFAVTIL…VMSFLFILLI (212 aa).

Belongs to the binding-protein-dependent transport system permease family. CysTW subfamily.

The protein localises to the cell membrane. Functionally, part of the binding-protein-dependent transport system YqgGHIJK. Probably responsible for the translocation of the substrate across the membrane. The chain is Probable ABC transporter permease protein YqgH (yqgH) from Bacillus subtilis (strain 168).